The primary structure comprises 754 residues: MSGTNLDGNDEFDEQLRMQELYGDGKDGDTQTDAGGEPDSLGQQPTDTPYEWDLDKKAWFPKITEDFIATYQANYGFSNDGASSSTANVEDVHARTAEEPPQEKAPEPTDPRKKGEKRKAESGWFHVEEDRNTNVYVSGLPPDITVDEFIQLMSKFGIIMRDPQTEEFKVKLYKDNQGNLKGDGLCCYLKRESVELALKLLDEDEIRGYKLHVEVAKFQLKGEYDASKKKKKCKDYKKKLSMQQKQLDWRPERRAGPSRMRHERVVIIKNMFHPMDFEDDPLVLNEIREDLRVECSKFGQIRKLLLFDRHPDGVASVSFRDPEEADYCIQTLDGRWFGGRQITAQAWDGTTDYQVEETSREREERLRGWEAFLNAPEANRGLRRSDSVSASERAGPSRARHFSEHPSTSKMNAQETATGMAFEEPIDEKKFEKTEDGGEFEEGASENNAKESSPEKEAEEGCPGKESEEGCPKRGFEGSCSQKESEEGNPLRGSEEGSPKKESKKKTLRNDCEENGFAKESEDDPNKESEEEVGPTKESEEDDSEKESDEDCSEKQSEDGSEREFEENGLEKDLDEEGSEKELHENVLDKELEENDSENSEFEDDGSEKVLDEEGSEREFDEDSDEKEEEEDTYEKVFDDESNEKEDEEYADEKGLEAADKKEEEGDADEKLFEESDDKEDEDADGKEVEDADEKLFEDDDSNEKLFDEEEDSNEKLFDDSDERGTLGGFGSVEEGPLSTGSSFILSSDDDDDI.

Disordered regions lie at residues 1 to 53 (MSGT…YEWD) and 81 to 122 (GASS…KAES). The residue at position 2 (Ser-2) is an N-acetylserine. Positions 90 to 122 (EDVHARTAEEPPQEKAPEPTDPRKKGEKRKAES) are enriched in basic and acidic residues. 2 consecutive RRM domains span residues 133–218 (TNVY…VAKF) and 264–349 (RVVI…AWDG). The U2AF homology motif (UHM) stretch occupies residues 259–353 (RMRHERVVII…AQAWDGTTDY (95 aa)). Lys-297 is modified (N6-acetyllysine). Residues 380-415 (RGLRRSDSVSASERAGPSRARHFSEHPSTSKMNAQE) form a disordered region. The segment at 381–754 (GLRRSDSVSA…ILSSDDDDDI (374 aa)) is mediates interaction with the P-TEFb complex. A phosphoserine mark is found at Ser-387, Ser-403, Ser-407, and Ser-409. A compositionally biased stretch (polar residues) spans 405–415 (HPSTSKMNAQE). Residues Lys-429 and Lys-430 each participate in a glycyl lysine isopeptide (Lys-Gly) (interchain with G-Cter in SUMO2) cross-link. Residues 433–754 (KTEDGGEFEE…ILSSDDDDDI (322 aa)) form a disordered region. Ser-445, Ser-452, and Ser-453 each carry phosphoserine. The segment covering 462-476 (CPGKESEEGCPKRGF) has biased composition (basic and acidic residues). Ser-481, Ser-485, Ser-494, Ser-498, Ser-521, and Ser-529 each carry phosphoserine. The segment covering 508 to 538 (LRNDCEENGFAKESEDDPNKESEEEVGPTKE) has biased composition (basic and acidic residues). Over residues 539–552 (SEEDDSEKESDEDC) the composition is skewed to acidic residues. The segment covering 553–563 (SEKQSEDGSER) has biased composition (basic and acidic residues). 3 positions are modified to phosphoserine: Ser-557, Ser-561, and Ser-579. Acidic residues predominate over residues 564–579 (EFEENGLEKDLDEEGS). Basic and acidic residues predominate over residues 580 to 590 (EKELHENVLDK). Over residues 591–606 (ELEENDSENSEFEDDG) the composition is skewed to acidic residues. A phosphoserine mark is found at Ser-597, Ser-600, Ser-607, Ser-616, and Ser-624. Composition is skewed to acidic residues over residues 613–633 (EEGS…EEDT) and 640–651 (DESNEKEDEEYA). A Phosphothreonine modification is found at Thr-633. Position 642 is a phosphoserine (Ser-642). The segment covering 652-674 (DEKGLEAADKKEEEGDADEKLFE) has biased composition (basic and acidic residues). Acidic residues predominate over residues 675-713 (ESDDKEDEDADGKEVEDADEKLFEDDDSNEKLFDEEEDS). A phosphoserine mark is found at Ser-676, Ser-702, Ser-713, Ser-721, and Ser-748. Basic and acidic residues predominate over residues 714–725 (NEKLFDDSDERG).

This sequence belongs to the HTATSF1 family. Component of the 17S U2 SnRNP complex, a ribonucleoprotein complex that contains small nuclear RNA (snRNA) U2 and a number of specific proteins. Within the 17S U2 SnRNP complex, interacts (via UHM region) directly with SF3B1. Component of a complex which is at least composed of HTATSF1/Tat-SF1, the P-TEFb complex components CDK9 and CCNT1, RNA polymerase II, SUPT5H, and NCL/nucleolin. Interacts with GTF2F2/RAP30 and POLR2A. Interacts with TCERG1/CA150. Interacts with (poly-ADP-ribosylated) RPA1; promoting HTATSF1 recruitment to DNA damage sites. Interacts (when phosphorylated) with TOPBP1; promoting recruitment of TOPBP1 to DNA damage sites during S-phase. Post-translationally, phosphorylation at Ser-748 by CK2 during S-phase in response to DNA damage promotes interaction with TOPBP1 and double-strand break (DSB) repair via homologous recombination.

The protein resides in the nucleus. It is found in the chromosome. Its function is as follows. Component of the 17S U2 SnRNP complex of the spliceosome, a large ribonucleoprotein complex that removes introns from transcribed pre-mRNAs. The 17S U2 SnRNP complex (1) directly participates in early spliceosome assembly and (2) mediates recognition of the intron branch site during pre-mRNA splicing by promoting the selection of the pre-mRNA branch-site adenosine, the nucleophile for the first step of splicing. Within the 17S U2 SnRNP complex, HTATSF1 is required to stabilize the branchpoint-interacting stem loop. HTATSF1 is displaced from the 17S U2 SnRNP complex before the stable addition of the 17S U2 SnRNP complex to the spliceosome, destabilizing the branchpoint-interacting stem loop and allowing to probe intron branch site sequences. Also acts as a regulator of transcriptional elongation, possibly by mediating the reciprocal stimulatory effect of splicing on transcriptional elongation. Involved in double-strand break (DSB) repair via homologous recombination in S-phase by promoting the recruitment of TOPBP1 to DNA damage sites. Mechanistically, HTATSF1 is (1) recruited to DNA damage sites in S-phase via interaction with poly-ADP-ribosylated RPA1 and (2) phosphorylated by CK2, promoting recruitment of TOPBP1, thereby facilitating RAD51 nucleofilaments formation and RPA displacement, followed by homologous recombination. The polypeptide is 17S U2 SnRNP complex component HTATSF1 (HTATSF1) (Pongo abelii (Sumatran orangutan)).